Here is a 239-residue protein sequence, read N- to C-terminus: Ribonuclease PH (239 aa).

Residues Arg87 and 125-127 (GTR) each bind phosphate.

The protein belongs to the RNase PH family. Homohexameric ring arranged as a trimer of dimers.

It catalyses the reaction tRNA(n+1) + phosphate = tRNA(n) + a ribonucleoside 5'-diphosphate. Functionally, phosphorolytic 3'-5' exoribonuclease that plays an important role in tRNA 3'-end maturation. Removes nucleotide residues following the 3'-CCA terminus of tRNAs; can also add nucleotides to the ends of RNA molecules by using nucleoside diphosphates as substrates, but this may not be physiologically important. Probably plays a role in initiation of 16S rRNA degradation (leading to ribosome degradation) during starvation. The protein is Ribonuclease PH of Acaryochloris marina (strain MBIC 11017).